A 280-amino-acid polypeptide reads, in one-letter code: Shikimate dehydrogenase (NADP(+)) (280 aa).

Residues 15–17 (SLS) and Thr-62 each bind shikimate. The active-site Proton acceptor is Lys-66. Residues Asn-88 and Asp-104 each contribute to the shikimate site. NADP(+)-binding positions include 128–132 (GAGGA), 151–156 (NRTEER), and Ile-222. Residue Tyr-224 participates in shikimate binding. Position 245 (Gly-245) interacts with NADP(+).

Belongs to the shikimate dehydrogenase family. Homodimer.

It catalyses the reaction shikimate + NADP(+) = 3-dehydroshikimate + NADPH + H(+). It participates in metabolic intermediate biosynthesis; chorismate biosynthesis; chorismate from D-erythrose 4-phosphate and phosphoenolpyruvate: step 4/7. In terms of biological role, involved in the biosynthesis of the chorismate, which leads to the biosynthesis of aromatic amino acids. Catalyzes the reversible NADPH linked reduction of 3-dehydroshikimate (DHSA) to yield shikimate (SA). The polypeptide is Shikimate dehydrogenase (NADP(+)) (Methanosarcina mazei (strain ATCC BAA-159 / DSM 3647 / Goe1 / Go1 / JCM 11833 / OCM 88) (Methanosarcina frisia)).